The sequence spans 259 residues: Ras-related protein Rab-34 (259 aa).

The residue at position 1 (methionine 1) is an N-acetylmethionine. Positions 62, 63, 64, 65, 66, 78, 81, and 84 each coordinate GTP. Position 66 (threonine 66) interacts with Mg(2+). The short motif at 71 to 89 (RFCKDTFDKNYKATIGVDF) is the Switch 1 element. Threonine 84 and aspartate 107 together coordinate Mg(2+). The Switch 2 motif lies at 108–127 (TAGQERFKCIASTYYRGAQA). The GTP site is built by glycine 110, lysine 167, aspartate 169, and serine 198. 2 positions are modified to phosphoserine: serine 241 and serine 244. S-geranylgeranyl cysteine attachment occurs at residues cysteine 257 and cysteine 258.

Belongs to the small GTPase superfamily. Rab family. Interacts with RILP. The GTP-bound form interacts with REP15. It depends on Mg(2+) as a cofactor.

It localises to the cytoplasm. The protein localises to the golgi apparatus. The protein resides in the cytoplasmic vesicle. It is found in the phagosome. Its subcellular location is the phagosome membrane. It localises to the cell projection. The protein localises to the cilium. The protein resides in the cytoskeleton. It is found in the microtubule organizing center. Its subcellular location is the centrosome. It localises to the centriole. It carries out the reaction GTP + H2O = GDP + phosphate + H(+). Regulated by guanine nucleotide exchange factors (GEFs) which promote the exchange of bound GDP for free GTP. Regulated by GTPase activating proteins (GAPs) which increase the GTP hydrolysis activity. Inhibited by GDP dissociation inhibitors (GDIs). In terms of biological role, the small GTPases Rab are key regulators of intracellular membrane trafficking, from the formation of transport vesicles to their fusion with membranes. Rabs cycle between an inactive GDP-bound form and an active GTP-bound form that is able to recruit to membranes different sets of downstream effectors directly responsible for vesicle formation, movement, tethering and fusion. RAB34 transports protein involved in the redistribution of lysosomes to the peri-Golgi region. Plays a role in the maturation of phagosomes that engulf pathogens, such as S.aureus and M.tuberculosis. Plays a role in the fusion of phagosomes with lysosomes. Involved in ciliogenesis. In particular, it is required for early steps of the intracellular cilium assembly pathway initiated by trafficking and docking of ciliary vesicles to the centrioles in the cytoplasm, followed by axoneme formation in the cytoplasm. After axoneme elongation, the centrioles migrate close to the cell surface so that ciliary vesicles can fuse with the plasma membrane to expose cilia to the extracellular space. It seems dispensable for ciliogenesis via the extracellular pathway where cilium assembly begins after migration and docking of the centriole to the plasma membrane. Also acts as a positive regulator of hedgehog signaling and regulates ciliary function. The polypeptide is Ras-related protein Rab-34 (Homo sapiens (Human)).